The chain runs to 456 residues: Bifunctional protein GlmU (456 aa).

A pyrophosphorylase region spans residues 1 to 229; sequence MLNNAMSVVI…LSEVEGVNNR (229 aa). UDP-N-acetyl-alpha-D-glucosamine contacts are provided by residues 11-14, Lys25, Gln76, 81-82, 103-105, Gly140, Glu154, Asn169, and Asn227; these read LAAG, GT, and YGD. Asp105 is a Mg(2+) binding site. Mg(2+) is bound at residue Asn227. The linker stretch occupies residues 230–250; sequence LQLSRLERVYQSEQAEKLLLA. Residues 251 to 456 are N-acetyltransferase; sequence GVMLRDPARF…EGWRRPVKKK (206 aa). 2 residues coordinate UDP-N-acetyl-alpha-D-glucosamine: Arg333 and Lys351. His363 (proton acceptor) is an active-site residue. UDP-N-acetyl-alpha-D-glucosamine is bound by residues Tyr366 and Asn377. Acetyl-CoA-binding positions include Ala380, 386–387, Ser405, Ala423, and Arg440; that span reads NY.

In the N-terminal section; belongs to the N-acetylglucosamine-1-phosphate uridyltransferase family. It in the C-terminal section; belongs to the transferase hexapeptide repeat family. Homotrimer. The cofactor is Mg(2+).

It localises to the cytoplasm. The catalysed reaction is alpha-D-glucosamine 1-phosphate + acetyl-CoA = N-acetyl-alpha-D-glucosamine 1-phosphate + CoA + H(+). The enzyme catalyses N-acetyl-alpha-D-glucosamine 1-phosphate + UTP + H(+) = UDP-N-acetyl-alpha-D-glucosamine + diphosphate. It functions in the pathway nucleotide-sugar biosynthesis; UDP-N-acetyl-alpha-D-glucosamine biosynthesis; N-acetyl-alpha-D-glucosamine 1-phosphate from alpha-D-glucosamine 6-phosphate (route II): step 2/2. Its pathway is nucleotide-sugar biosynthesis; UDP-N-acetyl-alpha-D-glucosamine biosynthesis; UDP-N-acetyl-alpha-D-glucosamine from N-acetyl-alpha-D-glucosamine 1-phosphate: step 1/1. The protein operates within bacterial outer membrane biogenesis; LPS lipid A biosynthesis. Functionally, catalyzes the last two sequential reactions in the de novo biosynthetic pathway for UDP-N-acetylglucosamine (UDP-GlcNAc). The C-terminal domain catalyzes the transfer of acetyl group from acetyl coenzyme A to glucosamine-1-phosphate (GlcN-1-P) to produce N-acetylglucosamine-1-phosphate (GlcNAc-1-P), which is converted into UDP-GlcNAc by the transfer of uridine 5-monophosphate (from uridine 5-triphosphate), a reaction catalyzed by the N-terminal domain. This is Bifunctional protein GlmU from Shigella sonnei (strain Ss046).